A 467-amino-acid polypeptide reads, in one-letter code: Glycosyl hydrolase family 109 protein 1 (467 aa).

Residues 1–22 (MKKLLLNTLIGLALLTCQTSFA) form the signal peptide. NAD(+)-binding positions include 66–67 (MR), aspartate 88, 137–140 (WKHH), 157–158 (EV), and asparagine 186. Substrate-binding positions include tyrosine 215, arginine 231, 243–246 (YATH), and tyrosine 321. NAD(+) is bound at residue tyrosine 243.

It belongs to the Gfo/Idh/MocA family. Glycosyl hydrolase 109 subfamily. NAD(+) is required as a cofactor.

Glycosidase. The sequence is that of Glycosyl hydrolase family 109 protein 1 from Bacteroides thetaiotaomicron (strain ATCC 29148 / DSM 2079 / JCM 5827 / CCUG 10774 / NCTC 10582 / VPI-5482 / E50).